Reading from the N-terminus, the 253-residue chain is Uracil-DNA glycosylase (253 aa).

D79 (proton acceptor) is an active-site residue.

Belongs to the uracil-DNA glycosylase (UDG) superfamily. UNG family.

The protein localises to the cytoplasm. The enzyme catalyses Hydrolyzes single-stranded DNA or mismatched double-stranded DNA and polynucleotides, releasing free uracil.. Excises uracil residues from the DNA which can arise as a result of misincorporation of dUMP residues by DNA polymerase or due to deamination of cytosine. In Xylella fastidiosa (strain 9a5c), this protein is Uracil-DNA glycosylase.